Here is a 453-residue protein sequence, read N- to C-terminus: Chromosomal replication initiator protein DnaA (453 aa).

A domain I, interacts with DnaA modulators region spans residues 1-73 (MNISPQYLWN…AQEVASVVGY (73 aa)). Residues 73–112 (YPVDIQLTTAEGETMAMTGEAQSYQEKSLTQIAPESPKLN) are domain II. The interval 113–329 (QLNPRYTFSR…GALIRAIAYT (217 aa)) is domain III, AAA+ region. 4 residues coordinate ATP: Gly157, Gly159, Lys160, and Thr161. The segment at 330 to 453 (SISGLSMTVQ…RINMASRTQS (124 aa)) is domain IV, binds dsDNA.

The protein belongs to the DnaA family. Oligomerizes as a right-handed, spiral filament on DNA at oriC.

The protein localises to the cytoplasm. Functionally, plays an essential role in the initiation and regulation of chromosomal replication. ATP-DnaA binds to the origin of replication (oriC) to initiate formation of the DNA replication initiation complex once per cell cycle. Binds the DnaA box (a 9 base pair repeat at the origin) and separates the double-stranded (ds)DNA. Forms a right-handed helical filament on oriC DNA; dsDNA binds to the exterior of the filament while single-stranded (ss)DNA is stabiized in the filament's interior. The ATP-DnaA-oriC complex binds and stabilizes one strand of the AT-rich DNA unwinding element (DUE), permitting loading of DNA polymerase. After initiation quickly degrades to an ADP-DnaA complex that is not apt for DNA replication. Binds acidic phospholipids. This chain is Chromosomal replication initiator protein DnaA, found in Rippkaea orientalis (strain PCC 8801 / RF-1) (Cyanothece sp. (strain PCC 8801)).